The primary structure comprises 263 residues: Putative hydro-lyase Pden_0321 (263 aa).

The protein belongs to the D-glutamate cyclase family.

This is Putative hydro-lyase Pden_0321 from Paracoccus denitrificans (strain Pd 1222).